A 399-amino-acid polypeptide reads, in one-letter code: Acetate kinase (399 aa).

Asparagine 7 provides a ligand contact to Mg(2+). Lysine 14 contacts ATP. A substrate-binding site is contributed by arginine 91. Catalysis depends on aspartate 148, which acts as the Proton donor/acceptor. ATP is bound by residues 208–212 (HLGNG) and 283–285 (DFR). Residue glutamate 384 coordinates Mg(2+).

It belongs to the acetokinase family. As to quaternary structure, homodimer. It depends on Mg(2+) as a cofactor. Requires Mn(2+) as cofactor.

Its subcellular location is the cytoplasm. The catalysed reaction is acetate + ATP = acetyl phosphate + ADP. It participates in metabolic intermediate biosynthesis; acetyl-CoA biosynthesis; acetyl-CoA from acetate: step 1/2. Functionally, catalyzes the formation of acetyl phosphate from acetate and ATP. Can also catalyze the reverse reaction. The sequence is that of Acetate kinase from Dictyoglomus thermophilum (strain ATCC 35947 / DSM 3960 / H-6-12).